The primary structure comprises 49 residues: Beta-toxin Rc1 (49 aa).

Intrachain disulfides connect Cys15/Cys31, Cys22/Cys40, and Cys26/Cys42.

This sequence belongs to the long (4 C-C) scorpion toxin superfamily. Sodium channel inhibitor family. Beta subfamily. In terms of tissue distribution, expressed by the venom gland.

It localises to the secreted. In terms of biological role, beta toxins bind voltage-independently at site-4 of sodium channels (Nav) and shift the voltage of activation toward more negative potentials thereby affecting sodium channel activation and promoting spontaneous and repetitive firing. This toxin acts on X.laevis Nav1.6/SCN8A and insect BgNav1 channels, and also displays a small but significant effect on X.laevis Nav1.4/SCN4A channels. In mice induces nociception (licking and lifting behaviors) during the first 15 minutes after injection, and increases the release of TNF-alpha in J774.1 cells. This chain is Beta-toxin Rc1, found in Rhopalurus crassicauda (Scorpion).